A 296-amino-acid polypeptide reads, in one-letter code: MKNEKIVVLYGGDSPEREVSLKSGKAVLDSLISQGYDAVGVDASGKELVAKLLELKPDKCFVALHGEDGENGRVSALLEMLEIKHTSSSMKSSVITMDKMISKEILMHYRMPTPMAKFLTDKLVAEDEISFPVAVKPSSGGSSIATFKVKSIQELKHAYEEASKYGEVMIEQWVTGKEITVAIVNDEVYSSVWIEPQNEFYDYESKYSGKSIYHSPSGLCEQKELEVRQLAKKAYDLLGCSGHARVDFIYDDRGNFYIMEINSSPGMTDNSLSPKSAAAEGVDFDSFVKRIIEQAQ.

The region spanning 103–293 (KEILMHYRMP…FDSFVKRIIE (191 aa)) is the ATP-grasp domain. An ATP-binding site is contributed by 129–180 (ISFPVAVKPSSGGSSIATFKVKSIQELKHAYEEASKYGEVMIEQWVTGKEIT). Asp-247, Glu-260, and Asn-262 together coordinate Mg(2+).

This sequence belongs to the D-alanine--D-alanine ligase family. Mg(2+) serves as cofactor. Mn(2+) is required as a cofactor.

It is found in the cytoplasm. The catalysed reaction is 2 D-alanine + ATP = D-alanyl-D-alanine + ADP + phosphate + H(+). The protein operates within cell wall biogenesis; peptidoglycan biosynthesis. Cell wall formation. The sequence is that of D-alanine--D-alanine ligase from Francisella tularensis subsp. tularensis (strain WY96-3418).